The chain runs to 458 residues: Argininosuccinate lyase (458 aa).

The protein belongs to the lyase 1 family. Argininosuccinate lyase subfamily.

It localises to the cytoplasm. The enzyme catalyses 2-(N(omega)-L-arginino)succinate = fumarate + L-arginine. It functions in the pathway amino-acid biosynthesis; L-arginine biosynthesis; L-arginine from L-ornithine and carbamoyl phosphate: step 3/3. This is Argininosuccinate lyase from Salmonella paratyphi B (strain ATCC BAA-1250 / SPB7).